Here is a 578-residue protein sequence, read N- to C-terminus: Putative multidrug export ATP-binding/permease protein SAB1799c (578 aa).

The Cytoplasmic portion of the chain corresponds to 1–15 (MIKRYLQFVKPYKYR). A helical transmembrane segment spans residues 16 to 36 (IFATIIVGIIKFGIPMLIPLL). Residues 16-306 (IFATIIVGII…LVASFTTLTQ (291 aa)) form the ABC transmembrane type-1 domain. Topologically, residues 37–59 (IKYAIDGVINNHALTTDEKVHHL) are extracellular. Residues 60–80 (TIAIGIALFIFVIVRPPIEFI) traverse the membrane as a helical segment. Topologically, residues 81 to 138 (RQYLAQWTSNKILYDIRKKLYNHLQALSARFYANNQVGQVISRVINDVEQTKDFILTG) are cytoplasmic. Residues 139 to 159 (LMNIWLDCITIIIALSIMFFL) traverse the membrane as a helical segment. At 160–162 (DVK) the chain is on the extracellular side. Residues 163 to 183 (LTLAALFIFPFYILTVYVFFG) form a helical membrane-spanning segment. At 184–242 (RLRKLTRERSQALAEVQGFLHERVQGISVVKSFAIEDNEAKNFDKKNANFLTRALKHTR) the chain is on the cytoplasmic side. The chain crosses the membrane as a helical span at residues 243–262 (WNAYSFATINTVTDIGPIIV). Residues 263 to 267 (IGVGA) lie on the Extracellular side of the membrane. A helical membrane pass occupies residues 268–287 (YLAISGSITVGTLAAFVGYL). The Cytoplasmic segment spans residues 288–578 (ELLFGPLRRL…YEHLYSIQNL (291 aa)). An ABC transporter domain is found at 340 to 575 (IDIYHVNFQY…QGAYEHLYSI (236 aa)). Residue 374–381 (GMSGGGKS) participates in ATP binding.

Belongs to the ABC transporter superfamily. In terms of assembly, homodimer.

Its subcellular location is the cell membrane. May be involved in multidrug export. Transmembrane domains (TMD) form a pore in the cell membrane and the ATP-binding domain (NBD) is responsible for energy generation. This Staphylococcus aureus (strain bovine RF122 / ET3-1) protein is Putative multidrug export ATP-binding/permease protein SAB1799c.